We begin with the raw amino-acid sequence, 152 residues long: Urease accessory protein UreE (152 aa).

It belongs to the UreE family.

The protein resides in the cytoplasm. In terms of biological role, involved in urease metallocenter assembly. Binds nickel. Probably functions as a nickel donor during metallocenter assembly. This chain is Urease accessory protein UreE, found in Citrobacter koseri (strain ATCC BAA-895 / CDC 4225-83 / SGSC4696).